The following is a 740-amino-acid chain: Ion-translocating oxidoreductase complex subunit C (740 aa).

2 consecutive 4Fe-4S ferredoxin-type domains span residues 369–397 (GEPQ…QQLY) and 407–436 (KATT…VQYF). [4Fe-4S] cluster is bound by residues Cys-377, Cys-380, Cys-383, Cys-387, Cys-416, Cys-419, Cys-422, and Cys-426. Disordered stretches follow at residues 602-652 (KLEQ…DPRK), 664-685 (ARKL…PRKA), and 695-714 (KARK…QVDP). Over residues 605-615 (QQQANAEPEQQ) the composition is skewed to low complexity.

The protein belongs to the 4Fe4S bacterial-type ferredoxin family. RnfC subfamily. In terms of assembly, the complex is composed of six subunits: RsxA, RsxB, RsxC, RsxD, RsxE and RsxG. Requires [4Fe-4S] cluster as cofactor.

The protein localises to the cell inner membrane. In terms of biological role, part of a membrane-bound complex that couples electron transfer with translocation of ions across the membrane. Required to maintain the reduced state of SoxR. This is Ion-translocating oxidoreductase complex subunit C from Escherichia coli O157:H7.